Consider the following 141-residue polypeptide: Large ribosomal subunit protein uL16 (141 aa).

This sequence belongs to the universal ribosomal protein uL16 family. In terms of assembly, part of the 50S ribosomal subunit.

Functionally, binds 23S rRNA and is also seen to make contacts with the A and possibly P site tRNAs. This chain is Large ribosomal subunit protein uL16, found in Rhodospirillum centenum (strain ATCC 51521 / SW).